Reading from the N-terminus, the 1054-residue chain is CCAAT/enhancer-binding protein zeta (1054 aa).

Positions 1-20 (MAAVKEPLEFHAKRPWRPEE) are enriched in basic and acidic residues. 2 disordered regions span residues 1–42 (MAAV…GFSL) and 102–160 (VEED…PKVK). Positions 21–34 (AVEDPDEEDEDNTS) are enriched in acidic residues. Over residues 109–120 (EKENSSKKEVKI) the composition is skewed to basic and acidic residues. Serine 113 is modified (phosphoserine). Over residues 124–138 (NNKNTAESQRTSVNK) the composition is skewed to polar residues. Serine 629 is subject to Phosphoserine. Lysine 695 carries the N6-acetyllysine modification. Serine 835 carries the phosphoserine modification. Disordered stretches follow at residues 873-902 (RTKGAKDNTLDEDSEGSDDELGNLDDDEVS) and 915-969 (DEDG…KKRN). Acidic residues-rich tracts occupy residues 882 to 902 (LDEDSEGSDDELGNLDDDEVS) and 915 to 933 (DEDGGTFMDVLDDESESVP). Phosphoserine is present on residues serine 959, serine 973, and serine 978. The interval 1031 to 1054 (IIKKKKHFKKKRIKTTQKTKKQRK) is disordered.

The protein belongs to the CBF/MAK21 family.

The protein localises to the nucleus. In terms of biological role, stimulates transcription from the HSP70 promoter. This Homo sapiens (Human) protein is CCAAT/enhancer-binding protein zeta (CEBPZ).